Consider the following 735-residue polypeptide: Protein-associating with the carboxyl-terminal domain of ezrin (735 aa).

Gly-2 carries N-myristoyl glycine lipidation. The Protein kinase domain maps to 2–245 (GSENSALKSY…LSTLLSHDFF (244 aa)). HEAT repeat units follow at residues 194-249 (FGAL…RNDF), 285-323 (LIAS…NAPG), 333-370 (LFQS…HFTQ), and 372-409 (QLKK…LLGP). The residue at position 439 (Ser-439) is a Phosphoserine. 2 disordered regions span residues 505-545 (LSDV…ASIH) and 604-648 (VPLT…GLGL). The segment covering 528 to 538 (WPDWSEPEEPE) has biased composition (acidic residues). The interaction with EZR stretch occupies residues 547-735 (WPREPCDVAE…EELAWEDNNW (189 aa)). Ser-701 is subject to Phosphoserine.

The protein belongs to the protein kinase superfamily. As to quaternary structure, interacts with EZR/VIL2 C-terminal domain. May be myristoylated; myristoylation may target it to Golgi compartment.

It is found in the cytoplasm. The protein resides in the golgi apparatus. It localises to the cell projection. The protein localises to the lamellipodium. Its function is as follows. May play a role in regulating cell adhesion/migration complexes in migrating cells. The sequence is that of Protein-associating with the carboxyl-terminal domain of ezrin (Scyl3) from Mus musculus (Mouse).